Consider the following 223-residue polypeptide: Deoxyribose-phosphate aldolase (223 aa).

The active-site Proton donor/acceptor is the Asp91. Residue Lys153 is the Schiff-base intermediate with acetaldehyde of the active site. Catalysis depends on Lys182, which acts as the Proton donor/acceptor.

Belongs to the DeoC/FbaB aldolase family. DeoC type 1 subfamily.

Its subcellular location is the cytoplasm. The catalysed reaction is 2-deoxy-D-ribose 5-phosphate = D-glyceraldehyde 3-phosphate + acetaldehyde. The protein operates within carbohydrate degradation; 2-deoxy-D-ribose 1-phosphate degradation; D-glyceraldehyde 3-phosphate and acetaldehyde from 2-deoxy-alpha-D-ribose 1-phosphate: step 2/2. Functionally, catalyzes a reversible aldol reaction between acetaldehyde and D-glyceraldehyde 3-phosphate to generate 2-deoxy-D-ribose 5-phosphate. The polypeptide is Deoxyribose-phosphate aldolase (Yersinia pestis bv. Antiqua (strain Angola)).